The following is a 468-amino-acid chain: SVGFKAGVKEYKLTYYTPEYETKDTDILAAFRVTPQPGVPPEEAGXAVAAESSTGTWTTVWTDGLTSLDRYKGRCYHIEPVPGEKDQYXXYVAYPLDLFEEGSVTNMFTSIVGNVFGFKALRALRLEDLRIPTAYIKTFQGPPHGIQVERDKLNKYGRPLLGCTIKPKLGLSAKNYGRAVYECLRGGLDFTKDDENVNSQPFMRWRDRFLFCAEAIYKSQAETGEIKGHYLNATAGTCEEMMKRAVFARELGVPIVMHDYLTGGFTANTSLAHYCRDNGLLLHIHRAMHAVIDRQKNHGMTFRVLRKALRLSGGDHIHAGTVVGKLEGERDITLGFVDLLRDDFVEKDRSRGIYFTQDWVSLPGVIPVASGGIHVWHMPALTEIFGDDSVLQFGGGTLGHPWGNAPGAVANRVALEACVLARNEGRDLAAEGNAIIREACKWSPELAAACEVWKEIKFEFKAVDTLDK.

Lysine 5 carries the post-translational modification N6,N6,N6-trimethyllysine. Positions 114 and 164 each coordinate substrate. The active-site Proton acceptor is the lysine 166. Lysine 168 lines the substrate pocket. Mg(2+)-binding residues include lysine 192, aspartate 194, and glutamate 195. Lysine 192 is subject to N6-carboxylysine. Histidine 285 functions as the Proton acceptor in the catalytic mechanism. Positions 286, 318, and 370 each coordinate substrate.

This sequence belongs to the RuBisCO large chain family. Type I subfamily. In terms of assembly, heterohexadecamer of 8 large chains and 8 small chains; disulfide-linked. The disulfide link is formed within the large subunit homodimers. It depends on Mg(2+) as a cofactor. In terms of processing, the disulfide bond which can form in the large chain dimeric partners within the hexadecamer appears to be associated with oxidative stress and protein turnover.

It localises to the plastid. The protein localises to the chloroplast. The catalysed reaction is 2 (2R)-3-phosphoglycerate + 2 H(+) = D-ribulose 1,5-bisphosphate + CO2 + H2O. It carries out the reaction D-ribulose 1,5-bisphosphate + O2 = 2-phosphoglycolate + (2R)-3-phosphoglycerate + 2 H(+). In terms of biological role, ruBisCO catalyzes two reactions: the carboxylation of D-ribulose 1,5-bisphosphate, the primary event in carbon dioxide fixation, as well as the oxidative fragmentation of the pentose substrate in the photorespiration process. Both reactions occur simultaneously and in competition at the same active site. The sequence is that of Ribulose bisphosphate carboxylase large chain from Salvia divinorum (Maria pastora).